The sequence spans 283 residues: Elongation factor Ts (283 aa).

Residues 79-82 form an involved in Mg(2+) ion dislocation from EF-Tu region; it reads TDFV.

It belongs to the EF-Ts family.

It localises to the cytoplasm. Functionally, associates with the EF-Tu.GDP complex and induces the exchange of GDP to GTP. It remains bound to the aminoacyl-tRNA.EF-Tu.GTP complex up to the GTP hydrolysis stage on the ribosome. The protein is Elongation factor Ts of Shewanella sp. (strain ANA-3).